A 406-amino-acid chain; its full sequence is CinA-like protein (406 aa).

The protein belongs to the CinA family.

In Thermomicrobium roseum (strain ATCC 27502 / DSM 5159 / P-2), this protein is CinA-like protein.